We begin with the raw amino-acid sequence, 454 residues long: MDKKPLNTLISATGLWMSRTGTIHKIKHHEVSRSKIYIEMACGDHLVVNNSRSSRTARALRHHKYRKTCKRCRVSDEDLNKFLTKANEDQTSVKVKVVSAPTRTKKAMPKSVARAPKPLENTEAAQAQPSGSKFSPAIPVSTQESVSVPASVSTSISSISTGATASALVKGNTNPITSMSAPVQASAPALTKSQTDRLEVLLNPKDEISLNSGKPFRELESELLSRRKKDLQQIYAEERENYLGKLEREITRFFVDRGFLEIKSPILIPLEYIERMGIDNDTELSKQIFRVDKNFCLRPMLAPNLYNYLRKLDRALPDPIKIFEIGPCYRKESDGKEHLEEFTMLNFCQMGSGCTRENLESIITDFLNHLGIDFKIVGDSCMVYGDTLDVMHGDLELSSAVVGPIPLDREWGIDKPWIGAGFGLERLLKVKHDFKNIKRAARSESYYNGISTNL.

A disordered region spans residues 102–138 (TRTKKAMPKSVARAPKPLENTEAAQAQPSGSKFSPAI). The span at 123–133 (EAAQAQPSGSK) shows a compositional bias: polar residues.

Belongs to the class-II aminoacyl-tRNA synthetase family.

It localises to the cytoplasm. The enzyme catalyses tRNA(Pyl) + L-pyrrolysine + ATP = L-pyrrolysyl-tRNA(Pyl) + AMP + diphosphate. Its function is as follows. Catalyzes the attachment of pyrrolysine to tRNA(Pyl). Pyrrolysine is a lysine derivative encoded by the termination codon UAG. In Methanosarcina mazei (strain ATCC BAA-159 / DSM 3647 / Goe1 / Go1 / JCM 11833 / OCM 88) (Methanosarcina frisia), this protein is Pyrrolysine--tRNA ligase.